Here is a 373-residue protein sequence, read N- to C-terminus: 4-hydroxy-3-methylbut-2-en-1-yl diphosphate synthase (flavodoxin) (373 aa).

Residues cysteine 270, cysteine 273, cysteine 305, and glutamate 312 each coordinate [4Fe-4S] cluster.

It belongs to the IspG family. Requires [4Fe-4S] cluster as cofactor.

It carries out the reaction (2E)-4-hydroxy-3-methylbut-2-enyl diphosphate + oxidized [flavodoxin] + H2O + 2 H(+) = 2-C-methyl-D-erythritol 2,4-cyclic diphosphate + reduced [flavodoxin]. The protein operates within isoprenoid biosynthesis; isopentenyl diphosphate biosynthesis via DXP pathway; isopentenyl diphosphate from 1-deoxy-D-xylulose 5-phosphate: step 5/6. Converts 2C-methyl-D-erythritol 2,4-cyclodiphosphate (ME-2,4cPP) into 1-hydroxy-2-methyl-2-(E)-butenyl 4-diphosphate. The sequence is that of 4-hydroxy-3-methylbut-2-en-1-yl diphosphate synthase (flavodoxin) from Photobacterium profundum (strain SS9).